We begin with the raw amino-acid sequence, 160 residues long: Probable prefoldin subunit 5 (160 aa).

Belongs to the prefoldin subunit alpha family. Heterohexamer of two PFD-alpha type and four PFD-beta type subunits.

Functionally, binds specifically to cytosolic chaperonin (c-CPN) and transfers target proteins to it. Binds to nascent polypeptide chain and promotes folding in an environment in which there are many competing pathways for nonnative proteins. The sequence is that of Probable prefoldin subunit 5 (pfdn5) from Dictyostelium discoideum (Social amoeba).